The primary structure comprises 141 residues: Drosulfakinins (141 aa).

An N-terminal signal peptide occupies residues methionine 1–alanine 31. A propeptide spanning residues glutamine 32–aspartate 73 is cleaved from the precursor. The interval glutamate 49–serine 69 is disordered. Phenylalanine amide is present on phenylalanine 82. Residues valine 86 to alanine 111 constitute a propeptide that is removed on maturation. Tyrosine 117 is modified (sulfotyrosine). Phenylalanine 122 bears the Phenylalanine amide mark. Tyrosine 134 bears the Sulfotyrosine mark. Phenylalanine 139 carries the phenylalanine amide modification.

It belongs to the gastrin/cholecystokinin family.

Its subcellular location is the secreted. Drosulfakinin-0 (DSK 0) plays diverse biological roles including regulating gut muscle contraction in adults but not in larvae. In Drosophila erecta (Fruit fly), this protein is Drosulfakinins.